A 307-amino-acid chain; its full sequence is Pollen allergen KBG 60 (307 aa).

The N-terminal stretch at 1-22 (MAVQKYTVALFLVALVVGPAAS) is a signal peptide.

It belongs to the Poa p IX/Phl p VI allergen family. Pollen.

The sequence is that of Pollen allergen KBG 60 from Poa pratensis (Kentucky bluegrass).